The sequence spans 239 residues: tRNA (guanine-N(1)-)-methyltransferase (239 aa).

Residues glycine 110 and 130-135 (IGDYVL) contribute to the S-adenosyl-L-methionine site.

The protein belongs to the RNA methyltransferase TrmD family. As to quaternary structure, homodimer.

Its subcellular location is the cytoplasm. It carries out the reaction guanosine(37) in tRNA + S-adenosyl-L-methionine = N(1)-methylguanosine(37) in tRNA + S-adenosyl-L-homocysteine + H(+). Functionally, specifically methylates guanosine-37 in various tRNAs. This is tRNA (guanine-N(1)-)-methyltransferase from Borrelia garinii subsp. bavariensis (strain ATCC BAA-2496 / DSM 23469 / PBi) (Borreliella bavariensis).